Consider the following 214-residue polypeptide: Phosphatidylserine decarboxylase proenzyme (214 aa).

Ser-182 serves as the catalytic Schiff-base intermediate with substrate; via pyruvic acid. Ser-182 carries the post-translational modification Pyruvic acid (Ser); by autocatalysis.

The protein belongs to the phosphatidylserine decarboxylase family. PSD-A subfamily. In terms of assembly, heterodimer of a large membrane-associated beta subunit and a small pyruvoyl-containing alpha subunit. The cofactor is pyruvate. Post-translationally, is synthesized initially as an inactive proenzyme. Formation of the active enzyme involves a self-maturation process in which the active site pyruvoyl group is generated from an internal serine residue via an autocatalytic post-translational modification. Two non-identical subunits are generated from the proenzyme in this reaction, and the pyruvate is formed at the N-terminus of the alpha chain, which is derived from the carboxyl end of the proenzyme. The post-translation cleavage follows an unusual pathway, termed non-hydrolytic serinolysis, in which the side chain hydroxyl group of the serine supplies its oxygen atom to form the C-terminus of the beta chain, while the remainder of the serine residue undergoes an oxidative deamination to produce ammonia and the pyruvoyl prosthetic group on the alpha chain.

The protein localises to the cell membrane. It carries out the reaction a 1,2-diacyl-sn-glycero-3-phospho-L-serine + H(+) = a 1,2-diacyl-sn-glycero-3-phosphoethanolamine + CO2. It functions in the pathway phospholipid metabolism; phosphatidylethanolamine biosynthesis; phosphatidylethanolamine from CDP-diacylglycerol: step 2/2. Its function is as follows. Catalyzes the formation of phosphatidylethanolamine (PtdEtn) from phosphatidylserine (PtdSer). In Burkholderia ambifaria (strain MC40-6), this protein is Phosphatidylserine decarboxylase proenzyme.